The following is a 498-amino-acid chain: Guanosine-5'-triphosphate,3'-diphosphate pyrophosphatase (498 aa).

This sequence belongs to the GppA/Ppx family. GppA subfamily.

It catalyses the reaction guanosine 3'-diphosphate 5'-triphosphate + H2O = guanosine 3',5'-bis(diphosphate) + phosphate + H(+). The protein operates within purine metabolism; ppGpp biosynthesis; ppGpp from GTP: step 2/2. Catalyzes the conversion of pppGpp to ppGpp. Guanosine pentaphosphate (pppGpp) is a cytoplasmic signaling molecule which together with ppGpp controls the 'stringent response', an adaptive process that allows bacteria to respond to amino acid starvation, resulting in the coordinated regulation of numerous cellular activities. The polypeptide is Guanosine-5'-triphosphate,3'-diphosphate pyrophosphatase (Yersinia pseudotuberculosis serotype O:1b (strain IP 31758)).